The sequence spans 147 residues: Hemoglobin subunit beta (147 aa).

Position 2 is an N-acetylvaline (V2). Residues 3–147 (HLTPEEKSAV…VANALAHKYH (145 aa)) form the Globin domain. Residue T13 is modified to Phosphothreonine. A Phosphoserine modification is found at S45. K60 carries the N6-acetyllysine modification. H64 contacts heme b. K83 is modified (N6-acetyllysine). H93 provides a ligand contact to heme b. C94 carries the post-translational modification S-nitrosocysteine. The residue at position 145 (K145) is an N6-acetyllysine.

Belongs to the globin family. As to quaternary structure, heterotetramer of two alpha chains and two beta chains in adult hemoglobin A (HbA). Red blood cells.

Its function is as follows. Involved in oxygen transport from the lung to the various peripheral tissues. This Pan paniscus (Pygmy chimpanzee) protein is Hemoglobin subunit beta (HBB).